A 684-amino-acid chain; its full sequence is MTTTSDQNAAAPPRFDGLRALFINATLKRSPELSHTDGLIERSSGIMREHGVQVDTLRAVDHDIATGVWPDMTEHGWATDEWPALYRRVLDAHILVLCGPIWLGDNSSVMKRVIERLYACSSLLNEDGQYAYYGRAGGCLITGNEDGVKHCAMNVLYSLQHLGYTIPPQADAGWIGEAGPGPSYLDPGSGGPENDFTNRNTTFMTFNLMHIAQMLRAPAASRPTAINAPSGTPAAGRTSPTPTTDSQRRSRVARWLVAGEFRLLSHLCSRGSKVGELAQDTRTSLKTSWYLLGPAFVAAIAYVDPGNVAANVSSGAQFGYLLLWVIVAANVMAALVQYLSAKLGLVTGRSLPEAIGKRMGRPARLAYWAQAEIVAMATDVAEVIGGAIALRIMFNLPLPIGGIITGVVSLLLLTIQDRRGQRLFERVITALLLVIAIGFTASFFVVTPPPNAVLGGLAPRFQGTESVLLAAAIMGATVMPHAVYLHSGLARDRHGHPDPGPQRRRLLRVTRWDVGLAMLIAGGVNAAMLLVAALNMRGRGDTASIEGAYHAVHDTLGATIAVLFAVGLLASGLASSSVGAYAGAMIMQGLLHWSVPMLVRRLITLGPALAILTLGFDPTRTLVLSQVVLSFGIPFAVLPLVKLTGSPAVMGGDTNHRATTWVGWVVAVMVSLLNVMLIYLTVTG.

The tract at residues 223 to 250 (PTAINAPSGTPAAGRTSPTPTTDSQRRS) is disordered. The next 11 helical transmembrane spans lie at 283–303 (TSLKTSWYLLGPAFVAAIAYV), 318–340 (FGYLLLWVIVAANVMAALVQYLS), 365–387 (LAYWAQAEIVAMATDVAEVIGGA), 391–413 (RIMFNLPLPIGGIITGVVSLLLL), 427–446 (VITALLLVIAIGFTASFFVV), 467–489 (VLLAAAIMGATVMPHAVYLHSGL), 514–534 (VGLAMLIAGGVNAAMLLVAAL), 555–577 (TLGATIAVLFAVGLLASGLASSS), 597–616 (MLVRRLITLGPALAILTLGF), 621–643 (TLVLSQVVLSFGIPFAVLPLVKL), and 656–678 (HRATTWVGWVVAVMVSLLNVMLI).

In the C-terminal section; belongs to the NRAMP family.

Its subcellular location is the cell membrane. H(+)-stimulated, divalent metal cation uptake system. The chain is Divalent metal cation transporter MntH (mntH) from Mycobacterium bovis (strain ATCC BAA-935 / AF2122/97).